We begin with the raw amino-acid sequence, 2563 residues long: Compactin diketide synthase mlcB (2563 aa).

A Ketosynthase family 3 (KS3) domain is found at 29–450 (STPIAIVGMG…GSNAHVILES (422 aa)). Residues Cys-202, His-337, and His-372 each act as for beta-ketoacyl synthase activity in the active site. The interval 568 to 915 (VFTGQGAQWH…TELISKGYGL (348 aa)) is acyl and malonyl transferase. Catalysis depends on Ser-658, which acts as the For malonyltransferase activity. Residues 951–960 (EPRGSRESKQ) are compositionally biased toward basic and acidic residues. The interval 951 to 971 (EPRGSRESKQRTHPPHTLIGS) is disordered. The interval 966-1103 (HTLIGSRESL…GLIRSESERS (138 aa)) is N-terminal hotdog fold. The 319-residue stretch at 966-1284 (HTLIGSRESL…FQSVGSSFSD (319 aa)) folds into the PKS/mFAS DH domain. The Proton acceptor; for dehydratase activity role is filled by His-998. Residues 998–1010 (HVVGSSIIFPGAG) are dehydratase-like. The segment at 1121-1284 (DNRSIDPNDL…FQSVGSSFSD (164 aa)) is C-terminal hotdog fold. Asp-1187 acts as the Proton donor; for dehydratase activity in catalysis. Residues 1542–1579 (YDVVVACQVLHATRCMKRTLSNVRKLLKPGGNLILVET) form a methyltransferase region. In terms of domain architecture, Carrier spans 2485-2562 (EAISIVLKAM…GLVELVVAKC (78 aa)). Ser-2522 is subject to O-(pantetheine 4'-phosphoryl)serine.

Pantetheine 4'-phosphate is required as a cofactor.

The enzyme catalyses holo-[2-methylbutanoate polyketide synthase] + 2 malonyl-CoA + S-adenosyl-L-methionine + 2 NADPH + 3 H(+) = (S)-2-methylbutanoyl-[2-methylbutanoate polyketide synthase] + S-adenosyl-L-homocysteine + 2 CO2 + 2 NADP(+) + 2 CoA + H2O. The protein operates within polyketide biosynthesis. In terms of biological role, diketide synthase; part of the gene cluster that mediates the biosynthesis of compactin, also known as mevastatin or ML-236B, and which acts as a potent competitive inhibitor of HMG-CoA reductase. Compactin biosynthesis is performed in two stages. The first stage is catalyzed by the nonaketide synthase mlcA, which belongs to type I polyketide synthases and catalyzes the iterative nine-step formation of the polyketide. This PKS stage is completed by the action of dehydrogenase mlcG, which catalyzes the NADPH-dependent reduction of the unsaturated tetra-, penta- and heptaketide intermediates that arise during the mlcA-mediated biosynthesis of the nonaketide chain and leads to dihydro-ML-236C carboxylate. Covalently bound dihydro-ML-236C carboxylate is released from mlcA by the mlcF esterase. Conversion of dihydro-ML-236C carboxylate into ML-236A carboxylate is subsequently performed with the participation of molecular oxygen and P450 monoogygenase mlcC. Finally, mlcH performs the conversion of ML-236A carboxylate to ML-236B/compactin carboxylate through the addition of the side-chain diketide moiety produced by the diketide synthase mlcB. The polypeptide is Compactin diketide synthase mlcB (mlcB) (Penicillium citrinum).